Consider the following 152-residue polypeptide: MGLSTLEQKLTEMITAPVEALGYELVGIEFIRGRTSTLRIYIDSEDGINVDDCADVSHQVSAVLDVEDPITVAYNLEVSSPGLDRPMFTAEHYARFLGEEVTLVLRMAVQNRRKWQGVIKAVDGEMITVTVEGKDEVFALSNIQKANLVPHF.

The protein belongs to the RimP family.

The protein resides in the cytoplasm. In terms of biological role, required for maturation of 30S ribosomal subunits. The sequence is that of Ribosome maturation factor RimP from Citrobacter koseri (strain ATCC BAA-895 / CDC 4225-83 / SGSC4696).